The primary structure comprises 618 residues: Chaperone protein dnaK (618 aa).

The segment at 595–618 is disordered; the sequence is SKTETTTPNKNEEDVIDASFSEEK.

It belongs to the heat shock protein 70 family.

The protein resides in the plastid. The protein localises to the cyanelle. In terms of biological role, acts as a chaperone. This is Chaperone protein dnaK (dnaK-A) from Cyanophora paradoxa.